Reading from the N-terminus, the 332-residue chain is Holliday junction branch migration complex subunit RuvB (332 aa).

Residues 1–181 are large ATPase domain (RuvB-L); it reads MSRILDNEIM…FGITGHMEYY (181 aa). ATP is bound by residues Leu-20, Arg-21, Gly-62, Lys-65, Thr-66, Thr-67, 128-130, Arg-171, Tyr-181, and Arg-218; that span reads EDF. Position 66 (Thr-66) interacts with Mg(2+). Residues 182 to 252 form a small ATPAse domain (RuvB-S) region; that stretch reads AHADLTEIVE…ITDKALTMLD (71 aa). The segment at 255–332 is head domain (RuvB-H); sequence HEGLDYVDQK…EHLGYEYSEK (78 aa). Positions 291, 310, 312, and 315 each coordinate DNA.

This sequence belongs to the RuvB family. As to quaternary structure, homohexamer. Forms an RuvA(8)-RuvB(12)-Holliday junction (HJ) complex. HJ DNA is sandwiched between 2 RuvA tetramers; dsDNA enters through RuvA and exits via RuvB. An RuvB hexamer assembles on each DNA strand where it exits the tetramer. Each RuvB hexamer is contacted by two RuvA subunits (via domain III) on 2 adjacent RuvB subunits; this complex drives branch migration. In the full resolvosome a probable DNA-RuvA(4)-RuvB(12)-RuvC(2) complex forms which resolves the HJ.

It localises to the cytoplasm. It catalyses the reaction ATP + H2O = ADP + phosphate + H(+). Functionally, the RuvA-RuvB-RuvC complex processes Holliday junction (HJ) DNA during genetic recombination and DNA repair, while the RuvA-RuvB complex plays an important role in the rescue of blocked DNA replication forks via replication fork reversal (RFR). RuvA specifically binds to HJ cruciform DNA, conferring on it an open structure. The RuvB hexamer acts as an ATP-dependent pump, pulling dsDNA into and through the RuvAB complex. RuvB forms 2 homohexamers on either side of HJ DNA bound by 1 or 2 RuvA tetramers; 4 subunits per hexamer contact DNA at a time. Coordinated motions by a converter formed by DNA-disengaged RuvB subunits stimulates ATP hydrolysis and nucleotide exchange. Immobilization of the converter enables RuvB to convert the ATP-contained energy into a lever motion, pulling 2 nucleotides of DNA out of the RuvA tetramer per ATP hydrolyzed, thus driving DNA branch migration. The RuvB motors rotate together with the DNA substrate, which together with the progressing nucleotide cycle form the mechanistic basis for DNA recombination by continuous HJ branch migration. Branch migration allows RuvC to scan DNA until it finds its consensus sequence, where it cleaves and resolves cruciform DNA. The polypeptide is Holliday junction branch migration complex subunit RuvB (Streptococcus pneumoniae serotype 2 (strain D39 / NCTC 7466)).